We begin with the raw amino-acid sequence, 281 residues long: 4-deoxy-L-threo-5-hexosulose-uronate ketol-isomerase (281 aa).

Zn(2+) is bound by residues H198, H200, E205, and H248.

It belongs to the KduI family. Zn(2+) is required as a cofactor.

It catalyses the reaction 5-dehydro-4-deoxy-D-glucuronate = 3-deoxy-D-glycero-2,5-hexodiulosonate. Its pathway is glycan metabolism; pectin degradation; 2-dehydro-3-deoxy-D-gluconate from pectin: step 4/5. In terms of biological role, catalyzes the isomerization of 5-dehydro-4-deoxy-D-glucuronate to 3-deoxy-D-glycero-2,5-hexodiulosonate. In Lacticaseibacillus paracasei (strain ATCC 334 / BCRC 17002 / CCUG 31169 / CIP 107868 / KCTC 3260 / NRRL B-441) (Lactobacillus paracasei), this protein is 4-deoxy-L-threo-5-hexosulose-uronate ketol-isomerase.